A 317-amino-acid chain; its full sequence is Eukaryotic translation initiation factor 2 subunit 2 (317 aa).

The tract at residues 1–146 (MSATEEENVL…KEKTITTSDG (146 aa)) is disordered. Residues 79 to 90 (AIEKLENEGAHD) show a composition bias toward basic and acidic residues. The segment covering 109–125 (KSSTTTTTSTTTTTTEP) has biased composition (low complexity). A C4-type zinc finger spans residues 222-246 (HVYNYVFAELGTNGSIDGNQRLVIR).

This sequence belongs to the eIF-2-beta/eIF-5 family. As to quaternary structure, eukaryotic translation initiation factor 2 eIF2 is a heterotrimeric complex composed of an alpha, a beta and a gamma subunit.

It localises to the cytoplasm. The protein localises to the cytosol. In terms of biological role, component of the eIF2 complex that functions in the early steps of protein synthesis by forming a ternary complex with GTP and initiator tRNA. This complex binds to a 40S ribosomal subunit, followed by mRNA binding to form a 43S pre-initiation complex (43S PIC). Junction of the 60S ribosomal subunit to form the 80S initiation complex is preceded by hydrolysis of the GTP bound to eIF2 and release of an eIF2-GDP binary complex. In order for eIF2 to recycle and catalyze another round of initiation, the GDP bound to eIF2 must exchange with GTP by way of a reaction catalyzed by eIF2B. The polypeptide is Eukaryotic translation initiation factor 2 subunit 2 (eif2s2) (Dictyostelium discoideum (Social amoeba)).